The following is a 128-amino-acid chain: Non-structural protein 4 (128 aa).

The chain crosses the membrane as a helical span at residues alanine 12–leucine 32.

The protein belongs to the coronaviruses ns4/ns4.8 protein family.

It localises to the host membrane. The polypeptide is Non-structural protein 4 (Murine coronavirus (strain A59) (MHV-A59)).